Reading from the N-terminus, the 325-residue chain is Beta-lactamase 1 (325 aa).

A signal peptide spans 1-26 (MRIRPTRRLLLGAVAPLALVPLVACG). The disordered stretch occupies residues 30-50 (GSESGQQPGLGGCGTSAHGSA). S93 serves as the catalytic Acyl-ester intermediate. 270 to 272 (KSG) is a binding site for substrate.

It belongs to the class-A beta-lactamase family.

The catalysed reaction is a beta-lactam + H2O = a substituted beta-amino acid. The protein is Beta-lactamase 1 (blaL) of Streptomyces cacaoi.